A 108-amino-acid polypeptide reads, in one-letter code: uncharacterized protein (108 aa).

The disordered stretch occupies residues 1–23 (MVDELEKNQVQPQETEENKENAL).

This is an uncharacterized protein from Ureaplasma parvum serovar 3 (strain ATCC 700970).